The primary structure comprises 1265 residues: Stromal processing peptidase, chloroplastic (1265 aa).

Residues 1-143 (MASSSSSIFT…SLRKHSQIVN (143 aa)) constitute a chloroplast transit peptide. His240 serves as a coordination point for Zn(2+). Residue Glu243 is the Proton acceptor of the active site. His244 contributes to the Zn(2+) binding site. Residue Glu314 is part of the active site. Glu321 is a Zn(2+) binding site.

The protein belongs to the peptidase M16 family. Requires Zn(2+) as cofactor.

Its subcellular location is the plastid. It localises to the chloroplast stroma. Its function is as follows. Cleaves presequences (transit peptides) from chloroplastic protein precursors. Initially recognizes a precursor by binding to the C-terminus of its transit peptide and then removes the transit peptide in a single endoproteolytic step. In a next step, pursues the cleavage of transit peptide to a subfragment form. The polypeptide is Stromal processing peptidase, chloroplastic (Arabidopsis thaliana (Mouse-ear cress)).